A 313-amino-acid polypeptide reads, in one-letter code: HTH-type transcriptional regulator CysB (313 aa).

An HTH lysR-type domain is found at 1–59 (MNLHQFRFVREAVRQNFNLTEAAKALYTSQPGVSKAIIELEDELGVEIFTRHGKRVRSL). A DNA-binding region (H-T-H motif) is located at residues 19–38 (LTEAAKALYTSQPGVSKAII).

It belongs to the LysR transcriptional regulatory family.

Transcriptional regulator preferentially involved in the control of sulfate transport and reduction. Binds to DNA at target promoter regions. This is HTH-type transcriptional regulator CysB from Burkholderia cenocepacia (strain ATCC BAA-245 / DSM 16553 / LMG 16656 / NCTC 13227 / J2315 / CF5610) (Burkholderia cepacia (strain J2315)).